A 124-amino-acid chain; its full sequence is Pal-related lipoprotein (124 aa).

An N-terminal signal peptide occupies residues 1–18 (MRYRAVFPMLIIVFALSG). A lipid anchor (N-palmitoyl cysteine) is attached at Cys19. Cys19 carries S-diacylglycerol cysteine lipidation.

The protein resides in the cell membrane. The protein is Pal-related lipoprotein (slp) of Bacillus subtilis (strain 168).